The sequence spans 432 residues: Crenactin (432 aa).

Residues 20–24 (TSYVK), 182–184 (GGH), 235–239 (EVVKR), 354–358 (GAFSW), and glutamine 399 contribute to the ATP site.

The protein belongs to the actin family. As to quaternary structure, monomer. The crenactin monomers polymerize into right-handed helical filaments, with 8 subunits per complete turn of the helix. Forms single-stranded filaments under high salt concentrations and double-stranded filaments under low salt concentrations. Interacts with arcadin-1 and arcadin-2.

Its subcellular location is the cytoplasm. It is found in the cytoskeleton. The enzyme catalyses ATP + H2O = ADP + phosphate + H(+). With respect to regulation, crenactin polymerization is inhibited by interaction with arcadin-2. Also significantly inhibited by elevated antibiotic A22 concentrations. In terms of biological role, forms the backbone of an actin-like archaeal cytoskeleton, which is involved in cell shape determination. Has ATPase activity. Shows highest activity towards ATP or GTP as nucleotide, and only residual activity on UTP, CTP and dNTPs. The polypeptide is Crenactin (Pyrobaculum calidifontis (strain DSM 21063 / JCM 11548 / VA1)).